A 412-amino-acid chain; its full sequence is Major facilitator superfamily domain-containing protein 3 (412 aa).

Transmembrane regions (helical) follow at residues 10–30 (GLYLVQGLPYGLQSGLLPVLL), 40–60 (VGLAKVLYAPWLLKLAWAPLV), 73–93 (STAGLGLVCGLLAGLPPPGAG), 94–114 (QAGLPAAVAGLLLLLNLGAAM), 138–158 (VQVVAYKLGAALAGGALLALL), 166–186 (LFLLLAATYWLAAALAWAAPA), 209–229 (VLAVPGTVWTAGFVLTYKLGE), 250–270 (LGLWNGVGAVVCSIAGSSLGG), 291–311 (LGGLACQTALVFHLDTLGASM), 321–341 (ALLSLCLQHFLGGLVTTVTFT), 361–381 (LLATLELLGKLLLGTLAGGLA), and 384–404 (LGPHPCFLLLLILSAFPVLYL).

This sequence belongs to the major facilitator superfamily.

The protein localises to the membrane. This Homo sapiens (Human) protein is Major facilitator superfamily domain-containing protein 3 (MFSD3).